A 1864-amino-acid polypeptide reads, in one-letter code: Nestin (1864 aa).

Met-1 carries the post-translational modification N-acetylmethionine. Residues 1–7 are head; the sequence is MEGCVGE. The coil 1A stretch occupies residues 8–43; sequence ESFQMWELNRRLEAYLTRVKTLEEQNQLLSAELGGL. Residues 8-314 enclose the IF rod domain; the sequence is ESFQMWELNR…TLLEAENSRL (307 aa). Positions 44–55 are linker 1; it reads RAQSGDASWRAR. The tract at residues 56–151 is coil 1B; that stretch reads ADDELAALRV…ASHEEERAHL (96 aa). Positions 152–174 are linker 12; sequence NAQAACTPRRPPAPAHASPIRAP. A coil 2A region spans residues 175–193; sequence EVEELARRLGEVWRGAVRD. Positions 194–196 are linker 2; it reads YQE. The coil 2B stretch occupies residues 197–314; it reads RVAHMESSLG…TLLEAENSRL (118 aa). Ser-312 bears the Phosphoserine mark. Residues 315–1864 form a tail region; it reads QTPGRSSQAS…DGDSWSSGED (1550 aa). Thr-316 carries the post-translational modification Phosphothreonine. Ser-356 and Ser-359 each carry phosphoserine. Residue Thr-389 is modified to Phosphothreonine. Disordered stretches follow at residues 437 to 492, 515 to 625, and 680 to 845; these read GVLP…EEEG, EIQE…MSPE, and KEDQ…LDEN. The span at 469-480 shows a compositional bias: basic and acidic residues; it reads SILEAKDRESSE. Residues 559–573 show a composition bias toward polar residues; sequence KENCNSSIEENSGTV. A phosphoserine mark is found at Ser-565 and Ser-575. Composition is skewed to basic and acidic residues over residues 575-598 and 609-618; these read SPEKEKQTPLKSLEEKNVEAEKTL and LGEEEPRMED. Residues Ser-623, Ser-688, Ser-731, Ser-775, Ser-841, Ser-862, and Ser-894 each carry the phosphoserine modification. 4 stretches are compositionally biased toward basic and acidic residues: residues 680–690, 698–732, 742–776, and 786–843; these read KEDQRFPRSPE, PLEKENQEPLRFEEAEDQVLERLIEKERQESLKSP, LLEKENQEPLRFEDAEDQVLERLIEKERQESLKSP, and LLEK…RSLD. Composition is skewed to basic and acidic residues over residues 916–925, 947–965, and 978–1012; these read ILGSLEDRNG, QRIVNHLEKESQEFLRSPE, and LEGENHDPLSSVVKEEQMAESKLENESQDSRKSLE. Residues 916-1113 form a disordered region; sequence ILGSLEDRNG…VKSSETENIE (198 aa). Ser-963, Ser-1010, and Ser-1021 each carry phosphoserine. Residues 1065-1090 show a composition bias toward basic and acidic residues; the sequence is EKVDPELPKPLRNDQEVVRSLDKENQ. 2 positions are modified to phosphoserine: Ser-1106 and Ser-1127. Disordered regions lie at residues 1129 to 1158, 1175 to 1344, 1375 to 1722, and 1735 to 1807; these read DTQEPLWSTEVTSETIEPLEDETQEPLGCV, LRSL…DSVE, EAIH…DDGL, and ETVS…GLEQ. Residues 1133–1143 show a composition bias toward polar residues; it reads PLWSTEVTSET. Phosphoserine occurs at positions 1177, 1188, and 1195. Positions 1204 to 1213 are enriched in basic and acidic residues; the sequence is GPEREQHQES. Ser-1216 bears the Phosphoserine mark. Positions 1254–1273 are enriched in basic and acidic residues; the sequence is TEDKAELHLRGQGGEEKAVE. A Phosphoserine modification is found at Ser-1290. The segment covering 1384-1405 has biased composition (basic and acidic residues); it reads ESVKAKIDQGLEEPGKEPKEAG. Acidic residues predominate over residues 1429–1440; it reads ESGEGWGEEEAS. Basic and acidic residues predominate over residues 1514-1527; that stretch reads GRVEDEPEFGRGEI. The segment covering 1532–1547 has biased composition (acidic residues); that stretch reads QDWEEGREDSEADELG. 2 positions are modified to phosphoserine: Ser-1541 and Ser-1565. Residues 1612 to 1621 are compositionally biased toward acidic residues; that stretch reads LSSEEFEDLG. A phosphoserine mark is found at Ser-1656 and Ser-1665. Positions 1658 to 1680 are enriched in acidic residues; it reads GFADEEESGEEGEEEDADEEEGA. Over residues 1703-1712 the composition is skewed to basic and acidic residues; sequence QRGDLEHESV. 2 stretches are compositionally biased toward low complexity: residues 1713-1722 and 1741-1755; these read GDSGLWDDGL and SAEPSGSEGSESASL. 2 positions are modified to phosphoserine: Ser-1745 and Ser-1747. The span at 1788–1797 shows a compositional bias: polar residues; that stretch reads QGPNLESEQV. Residues Ser-1837, Ser-1860, and Ser-1861 each carry the phosphoserine modification. Positions 1841–1864 are disordered; that stretch reads LGPSQPLKFTLSGVDGDSWSSGED.

Belongs to the intermediate filament family. Forms homodimers and homotetramers in vitro. In mixtures with other intermediate filament proteins such as vimentin and alpha-internexin, this protein preferentially forms heterodimers which can assemble to form intermediate filaments if nestin does not exceed 25%. Interacts with FHOD3. Constitutively phosphorylated. This increases during mitosis when the cytoplasmic intermediate filament network is reorganized.

Its function is as follows. Required for brain and eye development. Promotes the disassembly of phosphorylated vimentin intermediate filaments (IF) during mitosis and may play a role in the trafficking and distribution of IF proteins and other cellular factors to daughter cells during progenitor cell division. Required for survival, renewal and mitogen-stimulated proliferation of neural progenitor cells. The sequence is that of Nestin (Nes) from Mus musculus (Mouse).